We begin with the raw amino-acid sequence, 217 residues long: 3,4-dihydroxy-2-butanone 4-phosphate synthase (217 aa).

D-ribulose 5-phosphate is bound by residues 37 to 38 (RE), D42, 150 to 154 (RRGHT), and E174. E38 provides a ligand contact to Mg(2+). A Mg(2+)-binding site is contributed by H153.

Belongs to the DHBP synthase family. In terms of assembly, homodimer. Requires Mg(2+) as cofactor. Mn(2+) serves as cofactor.

It catalyses the reaction D-ribulose 5-phosphate = (2S)-2-hydroxy-3-oxobutyl phosphate + formate + H(+). The protein operates within cofactor biosynthesis; riboflavin biosynthesis; 2-hydroxy-3-oxobutyl phosphate from D-ribulose 5-phosphate: step 1/1. Its function is as follows. Catalyzes the conversion of D-ribulose 5-phosphate to formate and 3,4-dihydroxy-2-butanone 4-phosphate. This chain is 3,4-dihydroxy-2-butanone 4-phosphate synthase, found in Syntrophotalea carbinolica (strain DSM 2380 / NBRC 103641 / GraBd1) (Pelobacter carbinolicus).